A 513-amino-acid polypeptide reads, in one-letter code: ATP synthase subunit alpha (513 aa).

ATP is bound at residue 169 to 176 (GDRQTGKT).

This sequence belongs to the ATPase alpha/beta chains family. In terms of assembly, F-type ATPases have 2 components, CF(1) - the catalytic core - and CF(0) - the membrane proton channel. CF(1) has five subunits: alpha(3), beta(3), gamma(1), delta(1), epsilon(1). CF(0) has three main subunits: a(1), b(2) and c(9-12). The alpha and beta chains form an alternating ring which encloses part of the gamma chain. CF(1) is attached to CF(0) by a central stalk formed by the gamma and epsilon chains, while a peripheral stalk is formed by the delta and b chains.

The protein localises to the cell inner membrane. The catalysed reaction is ATP + H2O + 4 H(+)(in) = ADP + phosphate + 5 H(+)(out). Produces ATP from ADP in the presence of a proton gradient across the membrane. The alpha chain is a regulatory subunit. This chain is ATP synthase subunit alpha, found in Actinobacillus succinogenes (strain ATCC 55618 / DSM 22257 / CCUG 43843 / 130Z).